Consider the following 377-residue polypeptide: Chaperone protein DnaJ (377 aa).

In terms of domain architecture, J spans 5–70 (DFYEVLGVDR…EKRSAYDRMG (66 aa)). The CR-type zinc-finger motif lies at 136–214 (GCKKEISFTA…CHGTGVKDKS (79 aa)). 8 residues coordinate Zn(2+): Cys149, Cys152, Cys166, Cys169, Cys188, Cys191, Cys202, and Cys205. CXXCXGXG motif repeat units lie at residues 149–156 (CETCDGKG), 166–173 (CSTCGGHG), 188–195 (CPNCGGSG), and 202–209 (CNDCHGTG). A disordered region spans residues 353 to 377 (LDGDSKHHQSPKKKSFFEKLGDLFD). Residues 367–377 (SFFEKLGDLFD) are compositionally biased toward basic and acidic residues.

It belongs to the DnaJ family. As to quaternary structure, homodimer. Zn(2+) serves as cofactor.

The protein localises to the cytoplasm. Its function is as follows. Participates actively in the response to hyperosmotic and heat shock by preventing the aggregation of stress-denatured proteins and by disaggregating proteins, also in an autonomous, DnaK-independent fashion. Unfolded proteins bind initially to DnaJ; upon interaction with the DnaJ-bound protein, DnaK hydrolyzes its bound ATP, resulting in the formation of a stable complex. GrpE releases ADP from DnaK; ATP binding to DnaK triggers the release of the substrate protein, thus completing the reaction cycle. Several rounds of ATP-dependent interactions between DnaJ, DnaK and GrpE are required for fully efficient folding. Also involved, together with DnaK and GrpE, in the DNA replication of plasmids through activation of initiation proteins. This is Chaperone protein DnaJ from Psychrobacter sp. (strain PRwf-1).